We begin with the raw amino-acid sequence, 678 residues long: MTEARKILVTSALPYANGSIHLGHMLEYVQTDMWVRYQKLRGNQAIYVCADDAHGSAIMLRAEKEGITPEQLIDGVRAEHMADFADFGVDFDNYHSTHSQENRELSASIYLALRDKGHIATRAVTQYFDPEKGMFLADRFIKGSCPKCGAEDQYGDNCEKCGATYTPTELKNPRSAISGAVPVLKESQHFFFKLPDFEAMLKQWTRSGALQEAVANKIAEWLDGGLQEWDISRDAPYFGFEIPGEPGKYFYVWLDAPIGYMASFKNLCSKRPELDFDAFWGKDSTAELYHFIGKDIVNFHALFWPAMLEGAGYRKPTAVNVHGYLTVNGQKMSKSRGTFIKARTYLDHLNPEYLRYYYASKLGRGVDDLDLNLEDFVQKVNSDLVGKVVNIASRCAGFIHKGNDGLLVAANPEPELWDAFQAAAPSIAEAYEARDFSRAMREIMALADRANAWIADKAPWALNKVEGKQAEVQEICALGINLFRQLVIMLKPVLPKLAADAEAFLNVKPQTWADLSLPLANHQLNPFNPLLTRIEPAKIEAMVEASKEDLAAEASKPQGNGELAKDPLAAEINFDAFAAVDLRIALIEKCEFVEGADKLLRLSLDIGDEKRNVFSGIKSAYPDPSKLEGRLTLYVANLAPRKMKFGISEGMVLAAGPGGEEIYLLSPDSGAKPGQRVK.

The 'HIGH' region signature appears at 14–24 (PYANGSIHLGH). Positions 145, 148, 158, and 161 each coordinate Zn(2+). Residues 331–335 (KMSKS) carry the 'KMSKS' region motif. An ATP-binding site is contributed by lysine 334. The tRNA-binding domain occupies 576–678 (AFAAVDLRIA…SGAKPGQRVK (103 aa)).

It belongs to the class-I aminoacyl-tRNA synthetase family. MetG type 1 subfamily. In terms of assembly, homodimer. The cofactor is Zn(2+).

It is found in the cytoplasm. The enzyme catalyses tRNA(Met) + L-methionine + ATP = L-methionyl-tRNA(Met) + AMP + diphosphate. Functionally, is required not only for elongation of protein synthesis but also for the initiation of all mRNA translation through initiator tRNA(fMet) aminoacylation. The polypeptide is Methionine--tRNA ligase (Ectopseudomonas mendocina (strain ymp) (Pseudomonas mendocina)).